The chain runs to 189 residues: GTP cyclohydrolase 1 (189 aa).

Positions 78, 81, and 150 each coordinate Zn(2+).

This sequence belongs to the GTP cyclohydrolase I family. As to quaternary structure, homomer.

It carries out the reaction GTP + H2O = 7,8-dihydroneopterin 3'-triphosphate + formate + H(+). It functions in the pathway cofactor biosynthesis; 7,8-dihydroneopterin triphosphate biosynthesis; 7,8-dihydroneopterin triphosphate from GTP: step 1/1. The sequence is that of GTP cyclohydrolase 1 from Listeria monocytogenes serotype 4b (strain CLIP80459).